Reading from the N-terminus, the 1111-residue chain is Myosin IB heavy chain (1111 aa).

The 683-residue stretch at 9 to 691 (QGTDDLVMLP…TVFLLEEALD (683 aa)) folds into the Myosin motor domain. 102–109 (GESGAGKT) serves as a coordination point for ATP. A Phosphoserine modification is found at Ser332. The tract at residues 547–627 (GSLQKKRPTT…GFAYRNTFDK (81 aa)) is actin-binding. A TH1 domain is found at 729–913 (KERQRNSIDR…KGLIGTIASG (185 aa)). The interval 910-1058 (IASGLPSSTD…PAPQPSRPTA (149 aa)) is disordered. The segment covering 914–928 (LPSSTDSTPKNYNPN) has biased composition (polar residues). Composition is skewed to low complexity over residues 929 to 944 (SMSQ…QSAG), 952 to 967 (GAGQ…QQRP), and 991 to 1012 (PMGA…LPQP). A compositionally biased stretch (gly residues) spans 1017-1040 (GAPGGRGAPMGRGAPGGGPAGAGG). In terms of domain architecture, SH3 spans 1053–1111 (PSRPTAKALYDYDASSTDELSFKEGDIIFIVQKDNGGWTQGELKSGQKGWAPTNYLQYN).

The protein belongs to the TRAFAC class myosin-kinesin ATPase superfamily. Myosin family. In terms of assembly, myosin I heavy chain is single-headed. Dimer of a heavy and a light chain. Inability to self-assemble into filaments.

It localises to the cell projection. It is found in the pseudopodium. The protein localises to the cytoplasm. The protein resides in the cell cortex. Functionally, myosin is a protein that binds to actin and has ATPase activity that is activated by actin. Myosin IB may have a role in chemotaxis and aggregation; it could serve to stabilize and even retract cortical structures, such as pseudopods and lamellopods. Involved in the whole cell motility of aggregation-stages cells. Overexpression results in significant decrease in the rate of cellular translocation and fluid-phase pinocytosis and abnormalities in the normal rearrangement of the actin cytoskeleton. This Dictyostelium discoideum (Social amoeba) protein is Myosin IB heavy chain (myoB).